An 81-amino-acid polypeptide reads, in one-letter code: Photosystem I iron-sulfur center (81 aa).

2 consecutive 4Fe-4S ferredoxin-type domains span residues 2-31 (SHSV…MVPW) and 39-68 (IASA…VRVY). Residues Cys-11, Cys-14, Cys-17, Cys-21, Cys-48, Cys-51, Cys-54, and Cys-58 each contribute to the [4Fe-4S] cluster site.

In terms of assembly, the eukaryotic PSI reaction center is composed of at least 11 subunits. The cofactor is [4Fe-4S] cluster.

The protein resides in the plastid. Its subcellular location is the chloroplast thylakoid membrane. It carries out the reaction reduced [plastocyanin] + hnu + oxidized [2Fe-2S]-[ferredoxin] = oxidized [plastocyanin] + reduced [2Fe-2S]-[ferredoxin]. In terms of biological role, apoprotein for the two 4Fe-4S centers FA and FB of photosystem I (PSI); essential for photochemical activity. FB is the terminal electron acceptor of PSI, donating electrons to ferredoxin. The C-terminus interacts with PsaA/B/D and helps assemble the protein into the PSI complex. Required for binding of PsaD and PsaE to PSI. PSI is a plastocyanin/cytochrome c6-ferredoxin oxidoreductase, converting photonic excitation into a charge separation, which transfers an electron from the donor P700 chlorophyll pair to the spectroscopically characterized acceptors A0, A1, FX, FA and FB in turn. In Nephroselmis olivacea (Green alga), this protein is Photosystem I iron-sulfur center.